The primary structure comprises 228 residues: PKHD-type hydroxylase Reut_A2877 (228 aa).

A Fe2OG dioxygenase domain is found at 80-180; it reads IVYPPMFNRY…RVASFFWIQS (101 aa). Residues histidine 98, aspartate 100, and histidine 161 each contribute to the Fe cation site. Residue arginine 171 participates in 2-oxoglutarate binding.

Requires Fe(2+) as cofactor. The cofactor is L-ascorbate.

The sequence is that of PKHD-type hydroxylase Reut_A2877 from Cupriavidus pinatubonensis (strain JMP 134 / LMG 1197) (Cupriavidus necator (strain JMP 134)).